The chain runs to 246 residues: MPRYKLTIEYDGSPFVGWQAQTNGRSVQQVLEEGIKGFCGQELKIFGAGRTDAGVHALGQVAHVDFETPVAPDTLRDAVNAHMRPHPVAIVEAEEVPDSFEARFSAVKRHYMYRIVNRRAPLTLDRGQAWLVHKTLDADAMHDAAQALVGNHDFTTFRSVQCQAKSPVKTVDEISVSRYADEIEIVCRARSFLHNQVRSFVGTLKMVGDGSWTRRKVEKALAAKDRAACGPVAPPDGLYLLQVDYE.

The active-site Nucleophile is Asp-52. Tyr-111 contributes to the substrate binding site.

This sequence belongs to the tRNA pseudouridine synthase TruA family. In terms of assembly, homodimer.

The enzyme catalyses uridine(38/39/40) in tRNA = pseudouridine(38/39/40) in tRNA. Formation of pseudouridine at positions 38, 39 and 40 in the anticodon stem and loop of transfer RNAs. The sequence is that of tRNA pseudouridine synthase A from Parvibaculum lavamentivorans (strain DS-1 / DSM 13023 / NCIMB 13966).